Here is a 179-residue protein sequence, read N- to C-terminus: D-glycero-beta-D-manno-heptose-1,7-bisphosphate 7-phosphatase (179 aa).

Aspartate 7 (nucleophile) is an active-site residue. Residues aspartate 7 and aspartate 9 each coordinate Mg(2+). Position 7 (aspartate 7) interacts with substrate. The active-site Proton donor is aspartate 9. Substrate is bound by residues 15–19 (DSDAF), 50–53 (TNQS), and arginine 57. Residues cysteine 89, histidine 91, cysteine 97, and cysteine 99 each coordinate Zn(2+). Residue arginine 100 coordinates substrate. Aspartate 126 is a Mg(2+) binding site. Arginine 129 contacts substrate.

In terms of assembly, monomer. The cofactor is Mg(2+). Zn(2+) is required as a cofactor.

Its subcellular location is the cytoplasm. It carries out the reaction D-glycero-beta-D-manno-heptose 1,7-bisphosphate + H2O = D-glycero-beta-D-manno-heptose 1-phosphate + phosphate. It participates in nucleotide-sugar biosynthesis; ADP-L-glycero-beta-D-manno-heptose biosynthesis; ADP-L-glycero-beta-D-manno-heptose from D-glycero-beta-D-manno-heptose 7-phosphate: step 2/4. The protein operates within bacterial outer membrane biogenesis; LPS core biosynthesis. In terms of biological role, converts the D-glycero-beta-D-manno-heptose 1,7-bisphosphate (beta-HBP) intermediate into D-glycero-beta-D-manno-heptose 1-phosphate by removing the phosphate group at the C-7 position. The polypeptide is D-glycero-beta-D-manno-heptose-1,7-bisphosphate 7-phosphatase (Bordetella bronchiseptica (strain ATCC BAA-588 / NCTC 13252 / RB50) (Alcaligenes bronchisepticus)).